Consider the following 186-residue polypeptide: UPF0397 protein lp_0150 (186 aa).

The next 5 membrane-spanning stretches (helical) occupy residues 12-32 (VVAT…VAIP), 45-65 (GFLA…AVFI), 76-96 (GSPW…FGLA), 112-132 (LVWF…LLAP), and 151-171 (VITW…LLVL).

This sequence belongs to the UPF0397 family.

It is found in the cell membrane. This is UPF0397 protein lp_0150 from Lactiplantibacillus plantarum (strain ATCC BAA-793 / NCIMB 8826 / WCFS1) (Lactobacillus plantarum).